We begin with the raw amino-acid sequence, 189 residues long: dCTP deaminase (189 aa).

DCTP is bound by residues 112–117, 136–138, Q157, Y171, and Q181; these read KSTYAR and TLE. The Proton donor/acceptor role is filled by E138.

Belongs to the dCTP deaminase family. As to quaternary structure, homotrimer.

The catalysed reaction is dCTP + H2O + H(+) = dUTP + NH4(+). It functions in the pathway pyrimidine metabolism; dUMP biosynthesis; dUMP from dCTP (dUTP route): step 1/2. In terms of biological role, catalyzes the deamination of dCTP to dUTP. This is dCTP deaminase from Acinetobacter baumannii (strain SDF).